The primary structure comprises 999 residues: Probable beta-galactosidase C (999 aa).

The N-terminal stretch at M1–A21 is a signal peptide. N25 is a glycosylation site (N-linked (GlcNAc...) asparagine). Substrate-binding residues include Y80, N125, E127, and N185. E186 (proton donor) is an active-site residue. The N-linked (GlcNAc...) asparagine glycan is linked to N195. Y249 serves as a coordination point for substrate. A disulfide bond links C255 and C302. N274 carries an N-linked (GlcNAc...) asparagine glycan. The active-site Nucleophile is the E285. Y351 contacts substrate. Residues N389, N441, N512, N519, N600, N675, N713, N757, N808, and N897 are each glycosylated (N-linked (GlcNAc...) asparagine).

This sequence belongs to the glycosyl hydrolase 35 family.

It is found in the secreted. It catalyses the reaction Hydrolysis of terminal non-reducing beta-D-galactose residues in beta-D-galactosides.. In terms of biological role, cleaves beta-linked terminal galactosyl residues from gangliosides, glycoproteins, and glycosaminoglycans. This Talaromyces marneffei (strain ATCC 18224 / CBS 334.59 / QM 7333) (Penicillium marneffei) protein is Probable beta-galactosidase C (lacC).